Reading from the N-terminus, the 200-residue chain is Recombination protein RecR (200 aa).

Residues 58–75 (CSNCFCLKISQTSPCNFC) form a C4-type zinc finger. The Toprim domain maps to 82 to 177 (SSLCIVATPK…KISRLALGMP (96 aa)).

The protein belongs to the RecR family.

May play a role in DNA repair. It seems to be involved in an RecBC-independent recombinational process of DNA repair. It may act with RecF and RecO. The chain is Recombination protein RecR from Chlamydia trachomatis serovar D (strain ATCC VR-885 / DSM 19411 / UW-3/Cx).